The primary structure comprises 526 residues: ATP synthase subunit alpha (526 aa).

171–178 (GDRQTGKT) is a binding site for ATP.

This sequence belongs to the ATPase alpha/beta chains family. F-type ATPases have 2 components, CF(1) - the catalytic core - and CF(0) - the membrane proton channel. CF(1) has five subunits: alpha(3), beta(3), gamma(1), delta(1), epsilon(1). CF(0) has three main subunits: a(1), b(2) and c(9-12). The alpha and beta chains form an alternating ring which encloses part of the gamma chain. CF(1) is attached to CF(0) by a central stalk formed by the gamma and epsilon chains, while a peripheral stalk is formed by the delta and b chains.

Its subcellular location is the cell membrane. The catalysed reaction is ATP + H2O + 4 H(+)(in) = ADP + phosphate + 5 H(+)(out). Functionally, produces ATP from ADP in the presence of a proton gradient across the membrane. The alpha chain is a regulatory subunit. This chain is ATP synthase subunit alpha, found in Christiangramia forsetii (strain DSM 17595 / CGMCC 1.15422 / KT0803) (Gramella forsetii).